A 795-amino-acid polypeptide reads, in one-letter code: Phenylalanine--tRNA ligase beta subunit (795 aa).

Residues 39 to 148 enclose the tRNA-binding domain; it reads AGRFTGVVVG…AEAPIGQDIR (110 aa). One can recognise a B5 domain in the interval 401 to 476; it reads PQPATITLRR…RVYGYDAIPN (76 aa). Mg(2+) contacts are provided by Asp-454, Asp-460, Glu-463, and Glu-464. Residues 701–794 form the FDX-ACB domain; that stretch reads SRFPANRRDI…LKQRFQASLR (94 aa).

This sequence belongs to the phenylalanyl-tRNA synthetase beta subunit family. Type 1 subfamily. Tetramer of two alpha and two beta subunits. The cofactor is Mg(2+).

The protein resides in the cytoplasm. The enzyme catalyses tRNA(Phe) + L-phenylalanine + ATP = L-phenylalanyl-tRNA(Phe) + AMP + diphosphate + H(+). This chain is Phenylalanine--tRNA ligase beta subunit, found in Sodalis glossinidius (strain morsitans).